Consider the following 407-residue polypeptide: Geranylgeranyl diphosphate reductase (407 aa).

The protein belongs to the geranylgeranyl reductase family. ChlP subfamily.

The enzyme catalyses phytyl diphosphate + 3 NADP(+) = geranylgeranyl diphosphate + 3 NADPH + 3 H(+). Its pathway is porphyrin-containing compound metabolism; chlorophyll biosynthesis. Its function is as follows. Catalyzes the stepwise hydrogenation of geranylgeraniol to phytol during chlorophyll A (ChlA) biosynthesis. In Synechocystis sp. (strain ATCC 27184 / PCC 6803 / Kazusa), this protein is Geranylgeranyl diphosphate reductase (chlP).